Consider the following 98-residue polypeptide: NADH-ubiquinone oxidoreductase chain 4L (98 aa).

3 helical membrane passes run 1–21, 28–48, and 59–79; these read MMPISLSLTMAFSLALAGTLI, STLLCLEGMMLSLFILMAMLI, and APLILLVFSACEAGIGLALLV.

This sequence belongs to the complex I subunit 4L family. As to quaternary structure, core subunit of respiratory chain NADH dehydrogenase (Complex I) which is composed of 45 different subunits.

The protein resides in the mitochondrion inner membrane. It carries out the reaction a ubiquinone + NADH + 5 H(+)(in) = a ubiquinol + NAD(+) + 4 H(+)(out). In terms of biological role, core subunit of the mitochondrial membrane respiratory chain NADH dehydrogenase (Complex I) which catalyzes electron transfer from NADH through the respiratory chain, using ubiquinone as an electron acceptor. Part of the enzyme membrane arm which is embedded in the lipid bilayer and involved in proton translocation. In Petaurus breviceps (Australian sugar glider), this protein is NADH-ubiquinone oxidoreductase chain 4L (MT-ND4L).